Reading from the N-terminus, the 385-residue chain is Multidrug resistance protein MdtE (385 aa).

The signal sequence occupies residues 1–20; that stretch reads MNRRRKLLIPLLFCGAMLTA. A lipid anchor (N-palmitoyl cysteine) is attached at C21. C21 carries S-diacylglycerol cysteine lipidation.

This sequence belongs to the membrane fusion protein (MFP) (TC 8.A.1) family. Homotrimer. Part of the tripartite efflux system MdtEF-TolC, which is composed of an inner membrane transporter, MdtF, a membrane fusion protein, MdtE, and an outer membrane component, TolC. The complex forms a large protein conduit and can translocate molecules across both the inner and outer membranes.

It is found in the cell inner membrane. Part of the tripartite efflux system MdtEF-TolC, which confers resistance to compounds such as rhodamine 6G, erythromycin, doxorubicin, ethidium bromide, TPP, SDS, deoxycholate, crystal violet and benzalkonium. In Escherichia coli (strain K12), this protein is Multidrug resistance protein MdtE (mdtE).